Here is a 164-residue protein sequence, read N- to C-terminus: Protein SprT (164 aa).

The region spanning 13–156 is the SprT-like domain; it reads YQQAEAFFKR…LCRRCREPLV (144 aa). His-69 contributes to the Zn(2+) binding site. Glu-70 is a catalytic residue. His-73 serves as a coordination point for Zn(2+).

The protein belongs to the SprT family. Requires Zn(2+) as cofactor.

It localises to the cytoplasm. The sequence is that of Protein SprT from Pseudomonas syringae pv. syringae (strain B728a).